The primary structure comprises 196 residues: Anthranilate synthase component 2 (196 aa).

A Glutamine amidotransferase type-1 domain is found at 4-196; that stretch reads LILIIDNYDS…RDILENFLRM (193 aa). 60 to 62 contacts L-glutamine; the sequence is GPG. Catalysis depends on C89, which acts as the Nucleophile; for GATase activity. Residues Q93 and 138–139 each bind L-glutamine; that span reads SL. Catalysis depends on for GATase activity residues H177 and E179.

As to quaternary structure, heterotetramer consisting of two non-identical subunits: a beta subunit (TrpG) and a large alpha subunit (TrpE).

The enzyme catalyses chorismate + L-glutamine = anthranilate + pyruvate + L-glutamate + H(+). It functions in the pathway amino-acid biosynthesis; L-tryptophan biosynthesis; L-tryptophan from chorismate: step 1/5. In terms of biological role, part of a heterotetrameric complex that catalyzes the two-step biosynthesis of anthranilate, an intermediate in the biosynthesis of L-tryptophan. In the first step, the glutamine-binding beta subunit (TrpG) of anthranilate synthase (AS) provides the glutamine amidotransferase activity which generates ammonia as a substrate that, along with chorismate, is used in the second step, catalyzed by the large alpha subunit of AS (TrpE) to produce anthranilate. In the absence of TrpG, TrpE can synthesize anthranilate directly from chorismate and high concentrations of ammonia. This chain is Anthranilate synthase component 2 (trpG), found in Methanothermobacter marburgensis (strain ATCC BAA-927 / DSM 2133 / JCM 14651 / NBRC 100331 / OCM 82 / Marburg) (Methanobacterium thermoautotrophicum).